The following is a 214-amino-acid chain: Adenylate kinase (214 aa).

Residue 10-15 coordinates ATP; that stretch reads GAGKGT. An NMP region spans residues 30–59; that stretch reads STGDMLRAAVKAQSELGRQAKALMDAGKLV. AMP is bound by residues Thr31, Arg36, 57-59, 85-88, and Gln92; these read KLV and GFPR. Residues 122 to 159 form an LID region; it reads GRRVHAPSGRVYHVKFNPPKQEGKDDVTGELLTSRKDD. ATP contacts are provided by residues Arg123 and 132-133; that span reads VY. Positions 156 and 167 each coordinate AMP. Residue Arg200 coordinates ATP.

The protein belongs to the adenylate kinase family. In terms of assembly, monomer.

The protein resides in the cytoplasm. The enzyme catalyses AMP + ATP = 2 ADP. Its pathway is purine metabolism; AMP biosynthesis via salvage pathway; AMP from ADP: step 1/1. In terms of biological role, catalyzes the reversible transfer of the terminal phosphate group between ATP and AMP. Plays an important role in cellular energy homeostasis and in adenine nucleotide metabolism. The chain is Adenylate kinase from Sodalis glossinidius (strain morsitans).